The primary structure comprises 1485 residues: Cystic fibrosis transmembrane conductance regulator (1485 aa).

Residues 1-78 lie on the Cytoplasmic side of the membrane; it reads MQKTPLEKAS…KLINALKRCF (78 aa). The helical transmembrane segment at 79–99 threads the bilayer; it reads FWKFLFYGILLYLGEVTKAVQ. Residues 82–366 form the ABC transmembrane type-1 1 domain; it reads FLFYGILLYL…WAVQTWYDSL (285 aa). The Extracellular segment spans residues 100–123; the sequence is PLLLGRIIASYDRDNEHERSIAYY. Residues 124 to 147 form a helical membrane-spanning segment; it reads LAIGLCLLFVVRMLLLHPAIFGLH. Residues 148–196 are Cytoplasmic-facing; it reads HIGMQMRIAMFSLIYKKTLKLSSKVLDKISTGQLVSLLSNNLNKFDEGL. A helical transmembrane segment spans residues 197 to 217; that stretch reads ALAHFVWIAPLQVLLLMGLLW. Topologically, residues 218 to 223 are extracellular; the sequence is DLLQAS. A helical membrane pass occupies residues 224 to 244; sequence AFCGLGFLIILSLFQARLGRM. The Cytoplasmic portion of the chain corresponds to 245 to 299; that stretch reads MMKYKDKRAGKINERLVITSQIIENIQSVKAYCWENAMEKIIETIRETELKLTRK. Residues 300 to 320 form a helical membrane-spanning segment; that stretch reads AAYVRYFNSSAFFFSGFFVVF. Residues 321-340 are Extracellular-facing; the sequence is LSIVPHLLLDGISLRKIFTT. Residues 341–359 traverse the membrane as a helical segment; it reads ISFSIVLRMAVTRQFPWAV. Residues 360–860 lie on the Cytoplasmic side of the membrane; that stretch reads QTWYDSLGVI…YLRFLTAHKN (501 aa). ATP is bound by residues Trp402, Ser435, 459-466, and Gln494; that span reads GSTGAGKT. The region spanning 422-647 is the ABC transporter 1 domain; that stretch reads ISNEDPSAFF…RPEFSSHLIG (226 aa). The disordered R region stretch occupies residues 652–833; the sequence is NAERRNSIIT…EEINEEDLKE (182 aa). Over residues 750–760 the composition is skewed to polar residues; it reads PRSNFLNTGPT. Residues 861–881 form a helical membrane-spanning segment; the sequence is FIFILVFCLVIFFVEVAASSA. The ABC transmembrane type-1 2 domain occupies 880 to 1163; the sequence is SAWLWIIKRN…ASIDVDSLMR (284 aa). Over 882 to 923 the chain is Extracellular; sequence WLWIIKRNAPAINMTSNENVSEVSDTLSVIVTHTSFYYVFYI. Asn894 and Asn900 each carry an N-linked (GlcNAc...) asparagine glycan. The discontinuously helical transmembrane segment at 924–944 threads the bilayer; the sequence is YVGVADSLLALGIFRGLPLVH. Over 945 to 995 the chain is Cytoplasmic; the sequence is SLISVSKVLHKKMLHAILHAPMSTFNTMRAGRILNRFSKDTAILDDILPLS. The chain crosses the membrane as a helical span at residues 996 to 1016; sequence IFDLTQLVLIVIGAITVVSLL. Residues 1017–1018 lie on the Extracellular side of the membrane; sequence EP. A helical membrane pass occupies residues 1019-1039; the sequence is YIFLATVPVIVAFILLRSYFL. Residues 1040–1100 are Cytoplasmic-facing; sequence HTSQQLKQLE…TANWFLYLST (61 aa). The chain crosses the membrane as a helical span at residues 1101-1121; that stretch reads LRWFQMTIEMIFVIFFIAVSF. Residues 1122-1135 are Extracellular-facing; that stretch reads ISIATSGAGEEKVG. Residues 1136-1156 form a helical membrane-spanning segment; the sequence is IVLTLAMNIMNTLQWAVNASI. Residues 1157-1485 lie on the Cytoplasmic side of the membrane; sequence DVDSLMRSVS…TEEEVQDTRL (329 aa). The ABC transporter 2 domain occupies 1213–1446; sequence MTVKNLSANY…KSFFKQAISH (234 aa). Residues Tyr1222 and 1247-1254 each bind ATP; that span reads GRTGSGKS. Residues 1458-1485 form a disordered region; it reads RNSSKRKSRPQISALQEETEEEVQDTRL. Residues 1474 to 1485 are compositionally biased toward acidic residues; that stretch reads EETEEEVQDTRL. Residues 1483-1485 carry the PDZ-binding motif; the sequence is TRL.

This sequence belongs to the ABC transporter superfamily. ABCC family. CFTR transporter (TC 3.A.1.202) subfamily. Monomer; does not require oligomerization for channel activity. May form oligomers in the membrane. Post-translationally, phosphorylated; cAMP treatment promotes phosphorylation and activates the channel. Dephosphorylation decreases the ATPase activity (in vitro). Phosphorylation at PKA sites activates the channel. Phosphorylation at PKC sites enhances the response to phosphorylation by PKA.

The protein resides in the apical cell membrane. It localises to the early endosome membrane. Its subcellular location is the cell membrane. It is found in the recycling endosome membrane. The protein localises to the endoplasmic reticulum membrane. The enzyme catalyses ATP + H2O + closed Cl(-) channel = ADP + phosphate + open Cl(-) channel.. The catalysed reaction is chloride(in) = chloride(out). It catalyses the reaction hydrogencarbonate(in) = hydrogencarbonate(out). It carries out the reaction ATP + H2O = ADP + phosphate + H(+). Its function is as follows. Epithelial ion channel that plays an important role in the regulation of epithelial ion and water transport and fluid homeostasis. Mediates the transport of chloride ions across the cell membrane. Possesses an intrinsic ATPase activity and utilizes ATP to gate its channel; the passive flow of anions through the channel is gated by cycles of ATP binding and hydrolysis by the ATP-binding domains. The ion channel is also permeable to HCO(3)(-); selectivity depends on the extracellular chloride concentration. Exerts its function also by modulating the activity of other ion channels and transporters. Contributes to the regulation of the pH and the ion content of the epithelial fluid layer. This is Cystic fibrosis transmembrane conductance regulator from Xenopus laevis (African clawed frog).